The chain runs to 446 residues: Na(+)-translocating NADH-quinone reductase subunit A (446 aa).

It belongs to the NqrA family. In terms of assembly, composed of six subunits; NqrA, NqrB, NqrC, NqrD, NqrE and NqrF.

It catalyses the reaction a ubiquinone + n Na(+)(in) + NADH + H(+) = a ubiquinol + n Na(+)(out) + NAD(+). In terms of biological role, NQR complex catalyzes the reduction of ubiquinone-1 to ubiquinol by two successive reactions, coupled with the transport of Na(+) ions from the cytoplasm to the periplasm. NqrA to NqrE are probably involved in the second step, the conversion of ubisemiquinone to ubiquinol. In Pasteurella multocida (strain Pm70), this protein is Na(+)-translocating NADH-quinone reductase subunit A.